The following is a 559-amino-acid chain: Pentatricopeptide repeat-containing protein At4g38010 (559 aa).

PPR repeat units lie at residues 70 to 104, 105 to 139, 140 to 170, 171 to 201, 203 to 233, 238 to 268, 269 to 304, 305 to 339, 340 to 370, 371 to 405, 406 to 440, and 443 to 473; these read SSFSYNTLLSSYAVCDKPRVTIFAYKTFVSNGFSP, DMFTFPPVFKACGKFSGIREGKQIHGIVTKMGFYD, DIYVQNSLVHFYGVCGESRNACKVFGEMPVR, DVVSWTGIITGFTRTGLYKEALDTFSKMDVE, NLATYVCVLVSSGRVGCLSLGKGIHGLILKR, SLETGNALIDMYVKCEQLSDAMRVFGELEKK, DKVSWNSMISGLVHCERSKEAIDLFSLMQTSSGIKP, DGHILTSVLSACASLGAVDHGRWVHEYILTAGIKW, DTHIGTAIVDMYAKCGYIETALEIFNGIRSK, NVFTWNALLGGLAIHGHGLESLRYFEEMVKLGFKP, NLVTFLAALNACCHTGLVDEGRRYFHKMKSREYNL, and KLEHYGCMIDLLCRAGLLDEALELVKAMPVK. Residues 478–554 are type E motif; that stretch reads ICGAILSACK…VPGSSYIEKF (77 aa).

This sequence belongs to the PPR family. PCMP-E subfamily.

In Arabidopsis thaliana (Mouse-ear cress), this protein is Pentatricopeptide repeat-containing protein At4g38010 (PCMP-E45).